Reading from the N-terminus, the 404-residue chain is Zinc finger TRAF-type-containing protein 1 (404 aa).

Residues 1-13 are compositionally biased toward gly residues; it reads MSGAEEAGGGGPA. The interval 1 to 22 is disordered; the sequence is MSGAEEAGGGGPAAGPAGSVPA. The segment at 111–156 adopts an RING-type; degenerate zinc-finger fold; that stretch reads CTVCLDLPKASVYQCTNGHLMCAGCFIHLLADARLKEEQATCPNCR. Residues 152–225 form a TRAF-type zinc finger; it reads CPNCRCEISK…PWHGPFHELT (74 aa).

Belongs to the ZFTRAF1 family. In terms of assembly, interacts with LGALS3.

The protein resides in the cytoplasm. It is found in the perinuclear region. The polypeptide is Zinc finger TRAF-type-containing protein 1 (Homo sapiens (Human)).